The sequence spans 3133 residues: Hemocytin (3133 aa).

The 57-residue stretch at 40–96 (CTGGQQYTVCADSCLRKCSDTALAASGQCKPVCVEGCACSPSQLLDDNGVCVPVAKC) folds into the TIL 1 domain. The N-linked (GlcNAc...) asparagine glycan is linked to asparagine 151. Residues 153 to 209 (TAQNMEFTTCETSEPLTCKNMHLPPSTQTAECRPGCQCKKGQVLDTASKRCVPATQC) form the TIL 2 domain. The N-linked (GlcNAc...) asparagine glycan is linked to asparagine 237. The VWFD 1 domain maps to 247–418 (GVCGAWGDSH…DSWKLKPTCP (172 aa)). 3 disulfides stabilise this stretch: cysteine 249/cysteine 380, cysteine 271/cysteine 417, and cysteine 295/cysteine 302. The 68-residue stretch at 509–576 (CDEVCSNYDS…TTECVPRAKC (68 aa)) folds into the TIL 3 domain. N-linked (GlcNAc...) asparagine glycosylation is present at asparagine 564. Residues 661 to 680 (PDGQSVESEPLPKPNELQIG) form a disordered region. The TIL 4 domain occupies 770-837 (CPPGEVYQAC…ERTCVPVKDC (68 aa)). Residues 899–924 (STTTTTTTSTTTTTTTPEPTETTTET) form a disordered region. Intrachain disulfides connect cysteine 940–cysteine 1095 and cysteine 1116–cysteine 1254. F5/8 type C domains lie at 940–1095 (CSPD…IIGC) and 1116–1254 (CTEP…PIGC). Residues asparagine 1170, asparagine 1387, asparagine 1622, asparagine 1727, and asparagine 1847 are each glycosylated (N-linked (GlcNAc...) asparagine). Residues 1619–1794 (VFCNMTGRTF…KPGVPADACA (176 aa)) form the VWFD 2 domain. 2 disulfide bridges follow: cysteine 1621–cysteine 1754 and cysteine 1641–cysteine 1793. The region spanning 1890-1948 (CPPPLVHYDCYRKRCEETCAPYPNAARACPAQEGQCSPGCYCPDGKLRKGDQCVLPADC) is the TIL 5 domain. Residues 1951–2136 (CTCTGVGTPA…WQASPEKLTE (186 aa)) form the VWFD 3 domain. 2 cysteine pairs are disulfide-bonded: cysteine 1953–cysteine 2099 and cysteine 2001–cysteine 2009. N-linked (GlcNAc...) asparagine glycans are attached at residues asparagine 1975 and asparagine 1985. Residues asparagine 2093, asparagine 2113, asparagine 2161, asparagine 2276, and asparagine 2451 are each glycosylated (N-linked (GlcNAc...) asparagine). A TIL 6 domain is found at 2229–2285 (CEEPFVYRACVDCERTCDNYEQLQTSPEKCTNKPVEGCFCPEGKVRVNNTCIEPGKC). In terms of domain architecture, VWFC 1 spans 2553-2622 (VACRHQDNVY…DSGQCCGKCE (70 aa)). Residues asparagine 2647, asparagine 2654, asparagine 2663, asparagine 2794, asparagine 2810, asparagine 2865, asparagine 2929, asparagine 2964, and asparagine 3028 are each glycosylated (N-linked (GlcNAc...) asparagine). The 66-residue stretch at 2842–2907 (VACRDGDKIY…AADHCCGRCV (66 aa)) folds into the VWFC 2 domain. Disulfide bonds link cysteine 2971-cysteine 3040, cysteine 2991-cysteine 3054, cysteine 3004-cysteine 3070, and cysteine 3020-cysteine 3072. The 106-residue stretch at 2971–3076 (CNEKPQALSK…PARCHCAACG (106 aa)) folds into the CTCK domain.

In terms of processing, may be converted into the 260 kDa mature hemocytin by proteolysis.

In terms of biological role, adhesive protein and relates to hemostasis or encapsulation of foreign substances for self-defense. This Bombyx mori (Silk moth) protein is Hemocytin.